We begin with the raw amino-acid sequence, 214 residues long: Quinolone resistance pentapeptide repeat protein QnrB96 (214 aa).

2 consecutive Pentapeptide repeat domains span residues 23–103 and 116–189; these read STFH…SFMN and ITNT…VRGV.

This sequence belongs to the pentapeptide repeat protein family.

Its function is as follows. Confers reduced sensitivity to the fluoroquinolone antibiotic ciprofloxacin (five-fold increase in minimum inhibitory concentration) when expressed in E.coli. This is Quinolone resistance pentapeptide repeat protein QnrB96 from Scandinavium goeteborgense.